An 876-amino-acid chain; its full sequence is Alanine--tRNA ligase (876 aa).

4 residues coordinate Zn(2+): His564, His568, Cys666, and His670.

This sequence belongs to the class-II aminoacyl-tRNA synthetase family. Homotetramer. The cofactor is Zn(2+).

Its subcellular location is the cytoplasm. It carries out the reaction tRNA(Ala) + L-alanine + ATP = L-alanyl-tRNA(Ala) + AMP + diphosphate. In terms of biological role, catalyzes the attachment of alanine to tRNA(Ala) in a two-step reaction: alanine is first activated by ATP to form Ala-AMP and then transferred to the acceptor end of tRNA(Ala). Also edits incorrectly charged Ser-tRNA(Ala) and Gly-tRNA(Ala) via its editing domain. The chain is Alanine--tRNA ligase from Salmonella typhimurium (strain LT2 / SGSC1412 / ATCC 700720).